Consider the following 658-residue polypeptide: DNA ligase (658 aa).

Residues 32 to 36 (DAVYD) and 81 to 82 (SL) each bind NAD(+). Lys112 serves as the catalytic N6-AMP-lysine intermediate. The NAD(+) site is built by Arg133, Glu167, and Lys306. Zn(2+) contacts are provided by Cys400, Cys403, Cys416, and Cys421. Positions 577–658 (ESSSVFNNKT…LKRLKKLDQN (82 aa)) constitute a BRCT domain.

Belongs to the NAD-dependent DNA ligase family. LigA subfamily. Mg(2+) serves as cofactor. The cofactor is Mn(2+).

The catalysed reaction is NAD(+) + (deoxyribonucleotide)n-3'-hydroxyl + 5'-phospho-(deoxyribonucleotide)m = (deoxyribonucleotide)n+m + AMP + beta-nicotinamide D-nucleotide.. DNA ligase that catalyzes the formation of phosphodiester linkages between 5'-phosphoryl and 3'-hydroxyl groups in double-stranded DNA using NAD as a coenzyme and as the energy source for the reaction. It is essential for DNA replication and repair of damaged DNA. The sequence is that of DNA ligase from Helicobacter pylori (strain G27).